The following is a 574-amino-acid chain: Membrane protein insertase YidC (574 aa).

6 consecutive transmembrane segments (helical) span residues 6–26 (VFLIFAWLMVAALLWMEWGKE), 350–370 (VIDYSRFSIMAIIGQGLFWVL), 376–396 (FLHNWGWAIVGLVVLLRLVLY), 447–467 (GGCLPLLIQMPIFFALYWVLV), 491–511 (FILPALNIAIMWATQKLTPTP), and 525–545 (PLVFGAMMAFVPSGLVLYWVV).

It belongs to the OXA1/ALB3/YidC family. Type 1 subfamily. As to quaternary structure, interacts with the Sec translocase complex via SecD. Specifically interacts with transmembrane segments of nascent integral membrane proteins during membrane integration.

Its subcellular location is the cell inner membrane. Its function is as follows. Required for the insertion and/or proper folding and/or complex formation of integral membrane proteins into the membrane. Involved in integration of membrane proteins that insert both dependently and independently of the Sec translocase complex, as well as at least some lipoproteins. Aids folding of multispanning membrane proteins. The chain is Membrane protein insertase YidC from Xanthomonas oryzae pv. oryzae (strain KACC10331 / KXO85).